The chain runs to 350 residues: tRNA N6-adenosine threonylcarbamoyltransferase (350 aa).

Fe cation is bound by residues His117 and His121. Residues 140–144, Asp173, Gly186, and Asn277 contribute to the substrate site; that span reads LVSGG. Asp305 is a Fe cation binding site.

Belongs to the KAE1 / TsaD family. Fe(2+) serves as cofactor.

The protein localises to the cytoplasm. It carries out the reaction L-threonylcarbamoyladenylate + adenosine(37) in tRNA = N(6)-L-threonylcarbamoyladenosine(37) in tRNA + AMP + H(+). In terms of biological role, required for the formation of a threonylcarbamoyl group on adenosine at position 37 (t(6)A37) in tRNAs that read codons beginning with adenine. Is involved in the transfer of the threonylcarbamoyl moiety of threonylcarbamoyl-AMP (TC-AMP) to the N6 group of A37, together with TsaE and TsaB. TsaD likely plays a direct catalytic role in this reaction. The protein is tRNA N6-adenosine threonylcarbamoyltransferase of Novosphingobium aromaticivorans (strain ATCC 700278 / DSM 12444 / CCUG 56034 / CIP 105152 / NBRC 16084 / F199).